The following is a 92-amino-acid chain: Small ribosomal subunit protein uS19 (92 aa).

This sequence belongs to the universal ribosomal protein uS19 family.

In terms of biological role, protein S19 forms a complex with S13 that binds strongly to the 16S ribosomal RNA. The protein is Small ribosomal subunit protein uS19 of Allorhizobium ampelinum (strain ATCC BAA-846 / DSM 112012 / S4) (Agrobacterium vitis (strain S4)).